We begin with the raw amino-acid sequence, 324 residues long: Protein GET4 (324 aa).

The protein belongs to the GET4 family. In terms of assembly, interacts with GET3A.

The protein resides in the cytoplasm. The protein localises to the cytosol. Functionally, involved in the regulation of root hair growth. The chain is Protein GET4 from Arabidopsis thaliana (Mouse-ear cress).